The sequence spans 132 residues: Translation initiation factor 5A (132 aa).

Lys-36 bears the Hypusine mark.

This sequence belongs to the eIF-5A family.

It is found in the cytoplasm. Its function is as follows. Functions by promoting the formation of the first peptide bond. In Pyrobaculum islandicum (strain DSM 4184 / JCM 9189 / GEO3), this protein is Translation initiation factor 5A (eIF5A).